A 447-amino-acid polypeptide reads, in one-letter code: Glutamate--tRNA ligase 1 (447 aa).

Positions Pro-10 to Asn-20 match the 'HIGH' region motif. A 'KMSKS' region motif is present at residues Lys-240 to Arg-244. Residue Lys-243 participates in ATP binding.

This sequence belongs to the class-I aminoacyl-tRNA synthetase family. Glutamate--tRNA ligase type 1 subfamily. Monomer.

The protein localises to the cytoplasm. The catalysed reaction is tRNA(Glu) + L-glutamate + ATP = L-glutamyl-tRNA(Glu) + AMP + diphosphate. In terms of biological role, catalyzes the attachment of glutamate to tRNA(Glu) in a two-step reaction: glutamate is first activated by ATP to form Glu-AMP and then transferred to the acceptor end of tRNA(Glu). The protein is Glutamate--tRNA ligase 1 of Rickettsia akari (strain Hartford).